Here is a 274-residue protein sequence, read N- to C-terminus: uncharacterized protein (274 aa).

Residues 1 to 17 (MTQLTNFSESFSNQNSN) show a composition bias toward low complexity. Disordered stretches follow at residues 1-38 (MTQLTNFSESFSNQNSNLHQPYNFNSHQPPEENHYYVR) and 222-274 (ELGT…MEFE). Residues 18–28 (LHQPYNFNSHQ) are compositionally biased toward polar residues. The span at 29–38 (PPEENHYYVR) shows a compositional bias: basic and acidic residues. Composition is skewed to polar residues over residues 239-249 (PMASPTGSSQI) and 256-265 (SPNSLTNGSV).

This is an uncharacterized protein from Caenorhabditis elegans.